The sequence spans 723 residues: ADP-ribosylation factor-binding protein GGA3 (723 aa).

Residues 1–313 are binds to ARF1 (in long isoform); the sequence is MAEAEGESLE…GEVATLTLPD (313 aa). Positions 16-146 constitute a VHS domain; that stretch reads ATNPSNRQED…MLKRQGIVQS (131 aa). Ser159 and Ser275 each carry phosphoserine. The GAT domain maps to 171 to 298; that stretch reads DEEKSKLLAK…VINSYKTIIE (128 aa). Positions 299–593 are unstructured hinge; that stretch reads GQVINGEVAT…IHVPLESIKP (295 aa). The tract at residues 339 to 384 is disordered; sequence SSVLAPAPTPPSSGIPILPPPPQASGPPRSRSSSQAEATLGPSSTS. Over residues 345–363 the composition is skewed to pro residues; that stretch reads APTPPSSGIPILPPPPQAS. Over residues 364–374 the composition is skewed to low complexity; that stretch reads GPPRSRSSSQA. The DXXLL motif lies at 391–395; the sequence is DEELL. Residues 428-464 form a disordered region; it reads DFFSPRPGTAACGASDAPLLQPSAPSSSSSQAPLPPP. A compositionally biased stretch (low complexity) spans 441–459; sequence ASDAPLLQPSAPSSSSSQA. Residues 594-715 enclose the GAE domain; sequence SSALPVTAYD…TEVGEVDQFP (122 aa).

This sequence belongs to the GGA protein family. Monomer. Interacts with GGA1 and GGA2. Binds to clathrin and activated ARFs, such as ARF1, ARF5 and ARF6. Binds RABEP1 and RABGEF1. Interacts with the membrane proteins M6PR/CD-MPR and IGF2R/CI-MPR and the accessory proteins SYNRG, EPN4, NECAP1, NECAP2 and AFTPH/aftiphilin. Interacts with TSG101 and UBC. Interacts with ADRA2B. Interacts with NTRK1; the interaction is independent of NTRK1 activation and ubiquitination. Interacts (via VHS domain) with BACE1 (via DXXLL motif). Phosphorylated by CK2 and dephosphorylated by PP2A. Phosphorylation of GGA3 allows the internal DXXLL motif to bind the VHS domain and to inhibit the recognition of cargo signals. Post-translationally, ubiquitinated. In terms of processing, proteolytically cleaved during apoptosis by CASP3. Ubiquitously expressed.

Its subcellular location is the golgi apparatus. The protein localises to the trans-Golgi network membrane. The protein resides in the endosome membrane. It is found in the early endosome membrane. It localises to the recycling endosome membrane. Functionally, plays a role in protein sorting and trafficking between the trans-Golgi network (TGN) and endosomes. Mediates the ARF-dependent recruitment of clathrin to the TGN and binds ubiquitinated proteins and membrane cargo molecules with a cytosolic acidic cluster-dileucine (DXXLL) motif. Mediates export of the GPCR receptor ADRA2B to the cell surface. nvolved in BACE1 transport and sorting as well as regulation of BACE1 protein levels. Regulates retrograde transport of BACE1 from endosomes to the trans-Golgi network via interaction through the VHS motif and dependent of BACE1 phosphorylation. Modulates BACE1 protein levels independently of the interaction between VHS domain and DXXLL motif through recognition of ubiquitination. Key player in a novel DXXLL-mediated endosomal sorting machinery to the recycling pathway that targets NTRK1 to the plasma membrane. The protein is ADP-ribosylation factor-binding protein GGA3 of Homo sapiens (Human).